The sequence spans 251 residues: Ubiquinone/menaquinone biosynthesis C-methyltransferase UbiE (251 aa).

Residues T74, D95, and 123 to 124 contribute to the S-adenosyl-L-methionine site; that span reads DA.

The protein belongs to the class I-like SAM-binding methyltransferase superfamily. MenG/UbiE family.

It carries out the reaction a 2-demethylmenaquinol + S-adenosyl-L-methionine = a menaquinol + S-adenosyl-L-homocysteine + H(+). The catalysed reaction is a 2-methoxy-6-(all-trans-polyprenyl)benzene-1,4-diol + S-adenosyl-L-methionine = a 5-methoxy-2-methyl-3-(all-trans-polyprenyl)benzene-1,4-diol + S-adenosyl-L-homocysteine + H(+). The protein operates within quinol/quinone metabolism; menaquinone biosynthesis; menaquinol from 1,4-dihydroxy-2-naphthoate: step 2/2. It functions in the pathway cofactor biosynthesis; ubiquinone biosynthesis. Its function is as follows. Methyltransferase required for the conversion of demethylmenaquinol (DMKH2) to menaquinol (MKH2) and the conversion of 2-polyprenyl-6-methoxy-1,4-benzoquinol (DDMQH2) to 2-polyprenyl-3-methyl-6-methoxy-1,4-benzoquinol (DMQH2). The protein is Ubiquinone/menaquinone biosynthesis C-methyltransferase UbiE of Idiomarina loihiensis (strain ATCC BAA-735 / DSM 15497 / L2-TR).